The chain runs to 207 residues: Large ribosomal subunit protein uL4 (207 aa).

The disordered stretch occupies residues 50 to 76; it reads KTKTVSEVSGTTKKPFKQKGTGNARQG.

This sequence belongs to the universal ribosomal protein uL4 family. In terms of assembly, part of the 50S ribosomal subunit.

Its function is as follows. One of the primary rRNA binding proteins, this protein initially binds near the 5'-end of the 23S rRNA. It is important during the early stages of 50S assembly. It makes multiple contacts with different domains of the 23S rRNA in the assembled 50S subunit and ribosome. Forms part of the polypeptide exit tunnel. The chain is Large ribosomal subunit protein uL4 from Rickettsia canadensis (strain McKiel).